The following is a 280-amino-acid chain: Energy-coupling factor transporter ATP-binding protein EcfA1 (280 aa).

Positions 6-241 (LRIENISFQY…SHMLQEIGLD (236 aa)) constitute an ABC transporter domain. Residue 40–47 (GQNGSGKS) participates in ATP binding.

It belongs to the ABC transporter superfamily. Energy-coupling factor EcfA family. Forms a stable energy-coupling factor (ECF) transporter complex composed of 2 membrane-embedded substrate-binding proteins (S component), 2 ATP-binding proteins (A component) and 2 transmembrane proteins (T component).

The protein localises to the cell membrane. In terms of biological role, ATP-binding (A) component of a common energy-coupling factor (ECF) ABC-transporter complex. Unlike classic ABC transporters this ECF transporter provides the energy necessary to transport a number of different substrates. This Bacillus cereus (strain ATCC 14579 / DSM 31 / CCUG 7414 / JCM 2152 / NBRC 15305 / NCIMB 9373 / NCTC 2599 / NRRL B-3711) protein is Energy-coupling factor transporter ATP-binding protein EcfA1.